A 196-amino-acid polypeptide reads, in one-letter code: Transmembrane protein 126A (196 aa).

Topologically, residues 1 to 34 are mitochondrial matrix; it reads MESHKPSTSKDDLILNIISRKIKQLPESDRNLLE. A helical membrane pass occupies residues 35-55; it reads YGSAYIGLNAAFGGLIANSLF. At 56 to 57 the chain is on the mitochondrial intermembrane side; it reads RR. A helical membrane pass occupies residues 58–78; that stretch reads ILNVTQARLASSLPMAVIPFL. At 79 to 106 the chain is on the mitochondrial matrix side; sequence TANLSYQSLVSLPLSTGDLNCETCTTTR. The chain crosses the membrane as a helical span at residues 107–127; sequence GALVGLVMGGLYPILLAIPVN. The Mitochondrial intermembrane portion of the chain corresponds to 128–159; it reads GGLAARYESSPLPQRGNIFNYWITVSKPVFRK. Residues 160-176 form a helical membrane-spanning segment; that stretch reads MLFPTLLQTVFASYLGS. The Mitochondrial matrix segment spans residues 177 to 196; it reads RQYKLLIKALQLPEPDLEIH.

The protein belongs to the TMEM126 family. In terms of assembly, interacts with OXA1L; promoting cotranslational quality control in mitochondria. In the retina, significant levels of expression are detected in the ganglion cell layer, the optic nerve head, the outer plexiform layer, and in the outer ellipsoide length of photoreceptor inner segments.

The protein resides in the mitochondrion inner membrane. Its function is as follows. Protein required for the cotranslational protein quality control in the inner membrane of the mitochondria. Associates with newly synthesized polypeptides and may act as a chaperone that cooperates with OXA1L for the insertion of newly synthesized mitochondrial proteins into the inner membrane. Required for the assembly of the ND4 module of mitochondrial complex I. The sequence is that of Transmembrane protein 126A from Mus musculus (Mouse).